The following is a 218-amino-acid chain: MATRSLGVVISDDEPGYDLDLFCIPHHYAEDLEKVFIPHGLIMDRTERLARDVMKEMGGHHIVALCVLKGGYKFFADLLDYIKALNRNSDGSIPMTVDFIRLKSYCNDQSTGDIKVIGGDDLSTLTGKNVLIVEDIIDTGKTMQTLLSLVKEHNPKMVKVASLLVKRTPRSVGYKPDFVGFEIPDKFVVGYALDYNEYFRDLNHVCVISETGKAKYKA.

A2 carries the N-acetylalanine modification. K69 contributes to the GMP binding site. K103 is subject to N6-acetyllysine. Residue K115 forms a Glycyl lysine isopeptide (Lys-Gly) (interchain with G-Cter in SUMO1); alternate linkage. Residue K115 forms a Glycyl lysine isopeptide (Lys-Gly) (interchain with G-Cter in SUMO2); alternate linkage. Residues 134–142, K166, 186–188, and D194 each bind GMP; these read EDIIDTGKT and KFV. Catalysis depends on D138, which acts as the Proton acceptor. Phosphothreonine is present on T142. D194 is a binding site for Mg(2+).

It belongs to the purine/pyrimidine phosphoribosyltransferase family. Homotetramer. Requires Mg(2+) as cofactor.

The protein localises to the cytoplasm. The catalysed reaction is IMP + diphosphate = hypoxanthine + 5-phospho-alpha-D-ribose 1-diphosphate. It catalyses the reaction GMP + diphosphate = guanine + 5-phospho-alpha-D-ribose 1-diphosphate. It participates in purine metabolism; IMP biosynthesis via salvage pathway; IMP from hypoxanthine: step 1/1. Its function is as follows. Converts guanine to guanosine monophosphate, and hypoxanthine to inosine monophosphate. Transfers the 5-phosphoribosyl group from 5-phosphoribosylpyrophosphate onto the purine. Plays a central role in the generation of purine nucleotides through the purine salvage pathway. This Canis lupus familiaris (Dog) protein is Hypoxanthine-guanine phosphoribosyltransferase (HPRT1).